Here is a 324-residue protein sequence, read N- to C-terminus: GTP cyclohydrolase 1 (324 aa).

Disordered stretches follow at residues 33-59 and 79-119; these read GRNN…NQAE and VPLA…TPGH. Residues 40–49 show a composition bias toward low complexity; that stretch reads STSSTSGTSS. 2 stretches are compositionally biased toward polar residues: residues 50-59 and 93-117; these read LADRQQNQAE and TNGS…STTP. C214, H217, and C285 together coordinate Zn(2+).

It belongs to the GTP cyclohydrolase I family. In terms of assembly, toroid-shaped homodecamer, composed of two pentamers of five dimers. As to expression, isoform B is expressed almost exclusively in adult heads.

It carries out the reaction GTP + H2O = 7,8-dihydroneopterin 3'-triphosphate + formate + H(+). It functions in the pathway cofactor biosynthesis; 7,8-dihydroneopterin triphosphate biosynthesis; 7,8-dihydroneopterin triphosphate from GTP: step 1/1. Functionally, isoform B is required for eye pigment production, Isoform C may be required for normal embryonic development and segment pattern formation. The polypeptide is GTP cyclohydrolase 1 (Pu) (Drosophila melanogaster (Fruit fly)).